A 379-amino-acid chain; its full sequence is Succinyl-diaminopimelate desuccinylase (379 aa).

His70 contributes to the Zn(2+) binding site. Asp72 is a catalytic residue. Asp103 contacts Zn(2+). Residue Glu137 is the Proton acceptor of the active site. The Zn(2+) site is built by Glu138, Glu166, and His352.

Belongs to the peptidase M20A family. DapE subfamily. Homodimer. The cofactor is Zn(2+). It depends on Co(2+) as a cofactor.

The catalysed reaction is N-succinyl-(2S,6S)-2,6-diaminopimelate + H2O = (2S,6S)-2,6-diaminopimelate + succinate. Its pathway is amino-acid biosynthesis; L-lysine biosynthesis via DAP pathway; LL-2,6-diaminopimelate from (S)-tetrahydrodipicolinate (succinylase route): step 3/3. Its function is as follows. Catalyzes the hydrolysis of N-succinyl-L,L-diaminopimelic acid (SDAP), forming succinate and LL-2,6-diaminopimelate (DAP), an intermediate involved in the bacterial biosynthesis of lysine and meso-diaminopimelic acid, an essential component of bacterial cell walls. This is Succinyl-diaminopimelate desuccinylase from Shewanella baltica (strain OS195).